The primary structure comprises 410 residues: Methylamine dehydrogenase heavy chain (410 aa).

The first 35 residues, 1–35 (MTHAYTKVRQALCYGSATLGAAALAALIAAGSAAA), serve as a signal peptide directing secretion.

The protein belongs to the aromatic amine dehydrogenase heavy chain family. As to quaternary structure, tetramer of two light and two heavy chains.

It is found in the periplasm. The enzyme catalyses 2 oxidized [amicyanin] + methylamine + H2O = 2 reduced [amicyanin] + formaldehyde + NH4(+) + 2 H(+). Functionally, methylamine dehydrogenase carries out the oxidation of methylamine. Electrons are passed from methylamine dehydrogenase to amicyanin. This Methylorubrum extorquens (strain ATCC 14718 / DSM 1338 / JCM 2805 / NCIMB 9133 / AM1) (Methylobacterium extorquens) protein is Methylamine dehydrogenase heavy chain (mauB).